The sequence spans 205 residues: NADH-quinone oxidoreductase subunit I (205 aa).

2 4Fe-4S ferredoxin-type domains span residues 75–104 (RLLE…METS) and 114–143 (HEYT…HGGR). Residues Cys-84, Cys-87, Cys-90, Cys-94, Cys-123, Cys-126, Cys-129, and Cys-133 each contribute to the [4Fe-4S] cluster site.

Belongs to the complex I 23 kDa subunit family. NDH-1 is composed of 14 different subunits. Subunits NuoA, H, J, K, L, M, N constitute the membrane sector of the complex. The cofactor is [4Fe-4S] cluster.

It is found in the cell inner membrane. The catalysed reaction is a quinone + NADH + 5 H(+)(in) = a quinol + NAD(+) + 4 H(+)(out). In terms of biological role, NDH-1 shuttles electrons from NADH, via FMN and iron-sulfur (Fe-S) centers, to quinones in the respiratory chain. The immediate electron acceptor for the enzyme in this species is believed to be ubiquinone. Couples the redox reaction to proton translocation (for every two electrons transferred, four hydrogen ions are translocated across the cytoplasmic membrane), and thus conserves the redox energy in a proton gradient. This Wolinella succinogenes (strain ATCC 29543 / DSM 1740 / CCUG 13145 / JCM 31913 / LMG 7466 / NCTC 11488 / FDC 602W) (Vibrio succinogenes) protein is NADH-quinone oxidoreductase subunit I.